The primary structure comprises 851 residues: DNA mismatch repair protein MutS (851 aa).

An ATP-binding site is contributed by 602–609; it reads GPNMSGKS.

It belongs to the DNA mismatch repair MutS family.

In terms of biological role, this protein is involved in the repair of mismatches in DNA. It is possible that it carries out the mismatch recognition step. This protein has a weak ATPase activity. The sequence is that of DNA mismatch repair protein MutS from Streptococcus pyogenes serotype M49 (strain NZ131).